Reading from the N-terminus, the 212-residue chain is Methylthioribulose-1-phosphate dehydratase (212 aa).

Zn(2+) is bound by residues His-98 and His-100.

This sequence belongs to the aldolase class II family. MtnB subfamily. Zn(2+) is required as a cofactor.

The enzyme catalyses 5-(methylsulfanyl)-D-ribulose 1-phosphate = 5-methylsulfanyl-2,3-dioxopentyl phosphate + H2O. It functions in the pathway amino-acid biosynthesis; L-methionine biosynthesis via salvage pathway; L-methionine from S-methyl-5-thio-alpha-D-ribose 1-phosphate: step 2/6. In terms of biological role, catalyzes the dehydration of methylthioribulose-1-phosphate (MTRu-1-P) into 2,3-diketo-5-methylthiopentyl-1-phosphate (DK-MTP-1-P). The sequence is that of Methylthioribulose-1-phosphate dehydratase from Picosynechococcus sp. (strain ATCC 27264 / PCC 7002 / PR-6) (Agmenellum quadruplicatum).